The primary structure comprises 178 residues: ATP synthase subunit delta (178 aa).

It belongs to the ATPase delta chain family. F-type ATPases have 2 components, F(1) - the catalytic core - and F(0) - the membrane proton channel. F(1) has five subunits: alpha(3), beta(3), gamma(1), delta(1), epsilon(1). F(0) has three main subunits: a(1), b(2) and c(10-14). The alpha and beta chains form an alternating ring which encloses part of the gamma chain. F(1) is attached to F(0) by a central stalk formed by the gamma and epsilon chains, while a peripheral stalk is formed by the delta and b chains.

The protein localises to the cell inner membrane. Its function is as follows. F(1)F(0) ATP synthase produces ATP from ADP in the presence of a proton or sodium gradient. F-type ATPases consist of two structural domains, F(1) containing the extramembraneous catalytic core and F(0) containing the membrane proton channel, linked together by a central stalk and a peripheral stalk. During catalysis, ATP synthesis in the catalytic domain of F(1) is coupled via a rotary mechanism of the central stalk subunits to proton translocation. This protein is part of the stalk that links CF(0) to CF(1). It either transmits conformational changes from CF(0) to CF(1) or is implicated in proton conduction. The sequence is that of ATP synthase subunit delta from Nitrosococcus oceani (strain ATCC 19707 / BCRC 17464 / JCM 30415 / NCIMB 11848 / C-107).